A 325-amino-acid chain; its full sequence is 2-oxoglutarate-dependent dioxygenase tropC (325 aa).

Residues 185-287 (PSIPMRLLHY…RYSVAFFLNG (103 aa)) form the Fe2OG dioxygenase domain. The Fe cation site is built by H210, D212, and H269. Residue R278 participates in 2-oxoglutarate binding.

The protein belongs to the iron/ascorbate-dependent oxidoreductase family. Fe(2+) is required as a cofactor.

It functions in the pathway secondary metabolite biosynthesis. Its function is as follows. 2-oxoglutarate-dependent dioxygenase; part of the gene cluster that mediates the biosynthesis of the tropolone class of fungal maleic anhydrides. The pathway begins with the synthesis of 3-methylorcinaldehyde by the non-reducing polyketide synthase (PKS) tropA. 3-methylorcinaldehyde is the substrate for the FAD-dependent monooxygenase tropB to yield a dearomatized hydroxycyclohexadione. The 2-oxoglutarate-dependent dioxygenase tropC then performs the oxidative ring expansion to provide the first tropolone metabolite stipitaldehyde. Trop D converts stipitaldehyde into stipitacetal which is in turn converted to stipitalide by the short-chain dehydrogenase/reductase tropE. The next steps involve tropF, tropG, tropH, tropI and tropJ to form successive tropolone maleic anhydrides including stipitaldehydic, stipitatonic and stipitatic acids. The protein is 2-oxoglutarate-dependent dioxygenase tropC of Talaromyces stipitatus (strain ATCC 10500 / CBS 375.48 / QM 6759 / NRRL 1006) (Penicillium stipitatum).